The chain runs to 192 residues: Cytochrome b-245 light chain (192 aa).

Over 2-7 (GQIEWA) the chain is Cytoplasmic. Residues 8–30 (MWANEQALASGLILITGGIVATA) form a helical membrane-spanning segment. At 31-35 (GRFTQ) the chain is on the extracellular side. A helical transmembrane segment spans residues 36–53 (WYFGAYSIVAGVLICLLE). Over 54-69 (YPRGKRKKGSTMERCG) the chain is Cytoplasmic. The stretch at 70–80 (QKYLTAVVKLF) is an intramembrane region. The Cytoplasmic portion of the chain corresponds to 81 to 86 (GPLTRN). The chain crosses the membrane as a helical span at residues 87–104 (YYVRAVLHLLLSVPAGFL). A topological domain (extracellular) is located at residue Leu105. Residues 106–126 (ATILGTVCLAIASVIYLLAAI) form a helical membrane-spanning segment. The Cytoplasmic segment spans residues 127 to 192 (RGEQWTPIEP…NPIPVTDEVV (66 aa)). The disordered stretch occupies residues 134 to 192 (IEPKPKERPQVGGTIKQPPTNPPPRPPAEVRKKPSEAEEEAASAGGPQVNPIPVTDEVV). Residue Thr147 is modified to Phosphothreonine. Lys149 is covalently cross-linked (Glycyl lysine isopeptide (Lys-Gly) (interchain with G-Cter in ubiquitin)). 2 positions are modified to phosphoserine: Ser168 and Ser176.

It belongs to the p22phox family. In terms of assembly, component of the phagocyte NADPH oxidase core complex/cytochrome b558 complex, composed of CYBB (heavy chain (beta)) and CYBA (light chain (alpha)). Component of the phagocyte NADPH oxidase complex composed of an obligatory core heterodimer formed by the membrane proteins CYBA and CYBB and the cytosolic regulatory subunits NCF1/p47-phox, NCF2/p67-phox, NCF4/p40-phox and the small GTPase RAC1 or RAC2. Interacts with NCF1 (via SH3 domain). Interacts with SH3PXD2A. Interacts with DUOX1, DUOX2 and TPO. Interacts with NOX4; this interaction mediates superoxide generation. Interacts with calprotectin (S100A8/9). Interacts with GBP7. Interacts with NOXO1. Forms a heterodimer with NOX3 and is essential for activity and cell membrane localization of NOX3. Interacts with NOX1. Post-translationally, phosphorylation at Thr-147 enhances NADPH oxidase activity by promoting NCF1/p47-phox binding. In terms of processing, ubiquitinated at Lys-149 likely by RNF145. As to expression, expressed to a relatively high level in kidney, spleen, thymus and lung, and to a lower level in aorta, adrenals, and heart. Expression is not detected in liver or brain.

The protein resides in the cell membrane. Its function is as follows. Subunit of NADPH oxidase complexes that is required for the NADPH oxidase activity that generates, in various cell types, superoxide from molecular oxygen utilizing NADPH as an electron donor. Subunit of the phagocyte NADPH oxidase complex that mediates the transfer of electrons from cytosolic NADPH to O2 to produce the superoxide anion (O2(-)). In the activated complex, electrons are first transferred from NADPH to flavin adenine dinucleotide (FAD) and subsequently transferred via two heme molecules to molecular oxygen, producing superoxide through an outer-sphere reaction. Activation of the NADPH oxidase complex is initiated by the assembly of cytosolic subunits of the NADPH oxidase complex with the core NADPH oxidase complex to form a complex at the plasma membrane or phagosomal membrane. This activation process is initiated by phosphorylation dependent binding of the cytosolic NCF1/p47-phox subunit to the C-terminus of CYBA/p22-phox. Aassociates with NOX3 to form a functional NADPH oxidase constitutively generating superoxide. The polypeptide is Cytochrome b-245 light chain (Rattus norvegicus (Rat)).